The following is a 170-amino-acid chain: MITYDDEVVCAPRAGTLYDVLELILDRGMVIDVFVRVSLVGIEILKVDARIVVASVDTYLRFAEACNRLDLEHDVRSKTVPEMFGSPMAKTVGRAGARRTARSLTDKVRDVLTPEHEHEEEPEEAEDRPRAGAERGRSTQRPRSRPAARPRDEDDRPRSRPRRRTEEEDR.

Residues 86–170 form a disordered region; it reads SPMAKTVGRA…PRRRTEEEDR (85 aa). Composition is skewed to basic and acidic residues over residues 104-119 and 127-137; these read LTDK…HEHE and DRPRAGAERGR. The span at 138–148 shows a compositional bias: basic residues; sequence STQRPRSRPAA. Over residues 149 to 170 the composition is skewed to basic and acidic residues; the sequence is RPRDEDDRPRSRPRRRTEEEDR.

This sequence belongs to the gas vesicle GvpA family. The gas vesicle shell is 2 nm thick and consists of a single layer of this protein. It forms helical ribs nearly perpendicular to the long axis of the vesicle.

It localises to the gas vesicle shell. Gas vesicles are hollow, gas filled proteinaceous nanostructures found in some microorganisms. During planktonic growth they allow positioning of the organism at a favorable depth for light or nutrient acquisition. GvpA forms the protein shell. It is not clear what function GVs perform in soil bacteria. This is Gas vesicle protein A2 from Streptomyces coelicolor (strain ATCC BAA-471 / A3(2) / M145).